A 377-amino-acid polypeptide reads, in one-letter code: uncharacterized protein (377 aa).

Composition is skewed to polar residues over residues 1–11 (MSSIQGTSGSS) and 31–43 (PSGQ…AVGK). 3 disordered regions span residues 1–43 (MSSI…AVGK), 109–141 (SSEE…IARN), and 328–377 (SSSP…RGFQ). Positions 334-345 (EDPRSLRDRLRD) are enriched in basic and acidic residues.

This sequence belongs to the chlamydial CPn_0499/CT_392/TC_0671 family.

This is an uncharacterized protein from Chlamydia trachomatis serovar D (strain ATCC VR-885 / DSM 19411 / UW-3/Cx).